The chain runs to 707 residues: Drebrin (707 aa).

Alanine 2 carries the N-acetylalanine modification. The ADF-H domain maps to glycine 3 to serine 134. Phosphoserine occurs at positions 141 and 142. Positions glutamate 209 to arginine 236 are enriched in basic and acidic residues. Disordered stretches follow at residues glutamate 209 to glutamate 438, alanine 452 to alanine 497, tryptophan 531 to serine 557, leucine 582 to alanine 609, and leucine 630 to aspartate 707. Serine 241 is subject to Phosphoserine. The span at aspartate 288–glutamate 298 shows a compositional bias: basic and acidic residues. Residues serine 329 to proline 343 show a composition bias toward low complexity. Serine 342 carries the post-translational modification Phosphoserine. Over residues arginine 355 to proline 364 the composition is skewed to polar residues. Phosphothreonine occurs at positions 377 and 381. The span at proline 380–threonine 395 shows a compositional bias: polar residues. Serine 383, serine 385, and serine 391 each carry phosphoserine. At threonine 392 the chain carries Phosphothreonine. The segment covering glutamine 409–alanine 420 has biased composition (pro residues). Over residues proline 428–glutamate 438 the composition is skewed to basic and acidic residues. Serine 467 is subject to Phosphoserine. Phosphothreonine is present on threonine 549. Residues asparagine 639–serine 652 are compositionally biased toward polar residues. Position 659 is a phosphoserine (serine 659). A compositionally biased stretch (acidic residues) spans proline 695–aspartate 707.

As to quaternary structure, interacts with RUFY. Interacts with CXCR4; this interaction is enhanced by antigenic stimulation. Interacts (via ADF-H domain) with ZMYND8 (via N-terminus); the interaction leads to sequestering of ZMYND8 in the cytoplasm. In terms of processing, ISGylated. As to expression, brain neurons.

Its subcellular location is the cytoplasm. It is found in the cell projection. The protein resides in the dendrite. It localises to the cell cortex. The protein localises to the cell junction. Its subcellular location is the growth cone. Functionally, actin cytoskeleton-organizing protein that plays a role in the formation of cell projections. Required for actin polymerization at immunological synapses (IS) and for the recruitment of the chemokine receptor CXCR4 to IS. Plays a role in dendritic spine morphogenesis and organization, including the localization of the dopamine receptor DRD1 to the dendritic spines. Involved in memory-related synaptic plasticity in the hippocampus. The chain is Drebrin (Dbn1) from Rattus norvegicus (Rat).